The chain runs to 318 residues: 1-phosphofructokinase (318 aa).

ATP-binding positions include 228–233 and 259–260; these read SMGTEG and GD. The active-site Proton acceptor is the D260.

The protein belongs to the carbohydrate kinase PfkB family.

It catalyses the reaction beta-D-fructose 1-phosphate + ATP = beta-D-fructose 1,6-bisphosphate + ADP + H(+). In terms of biological role, catalyzes the ATP-dependent phosphorylation of fructose-l-phosphate to fructose-l,6-bisphosphate. This chain is 1-phosphofructokinase, found in Xanthomonas campestris pv. campestris (strain ATCC 33913 / DSM 3586 / NCPPB 528 / LMG 568 / P 25).